Consider the following 58-residue polypeptide: Large ribosomal subunit protein eL24 (58 aa).

The Zn(2+) site is built by Cys6, Cys9, Cys32, and Cys36. A C4-type zinc finger spans residues 6–36; sequence CSFCGYDIEPGTGKMYVRRDGRVFYFCSGKC.

The protein belongs to the eukaryotic ribosomal protein eL24 family. As to quaternary structure, part of the 50S ribosomal subunit. Forms a cluster with proteins L3 and L14. It depends on Zn(2+) as a cofactor.

Functionally, binds to the 23S rRNA. This is Large ribosomal subunit protein eL24 from Archaeoglobus fulgidus (strain ATCC 49558 / DSM 4304 / JCM 9628 / NBRC 100126 / VC-16).